Here is a 259-residue protein sequence, read N- to C-terminus: MSPSSKKFKKQSSSKSVKPPLEDNDPSLPSFTSLPDEIVLDCLQRVPRSYYLNLCRVSKTLRSLVRSPELSRLRTLLPKNSVYVSFSQNIINVPPDTIYRWFTLKKKTMKTAMKTFRYKLVKIPIPFPSHHSMYNSSAVGSEIYFVGGSFEPMSELWILDTRTGMFRQGPSMKVARTDEASVGVINGKIYVIGGCEDKIQVEVYDPKSRSWKTTKDPEEKTQRGLMTRLSAVSLDWKVYTVEVGRIGVYDPREAGVDGF.

Basic residues predominate over residues 1 to 12; that stretch reads MSPSSKKFKKQS. The interval 1–29 is disordered; sequence MSPSSKKFKKQSSSKSVKPPLEDNDPSLP. Residues 28-76 form the F-box domain; that stretch reads LPSFTSLPDEIVLDCLQRVPRSYYLNLCRVSKTLRSLVRSPELSRLRTL. Residues 142–186 form a Kelch repeat; the sequence is EIYFVGGSFEPMSELWILDTRTGMFRQGPSMKVARTDEASVGVIN.

The chain is F-box/kelch-repeat protein At2g22050 from Arabidopsis thaliana (Mouse-ear cress).